Here is a 672-residue protein sequence, read N- to C-terminus: Transcription factor tau 91 kDa subunit (672 aa).

The segment at 1-158 (MAVIPAKKRG…SLGQKGRPIR (158 aa)) is required for DNA-binding. Positions 6–18 (AKKRGRPRKSVVA) form a DNA-binding region, a.T hook. 2 disordered regions span residues 24 to 45 (SLASPVSENSGSKRPRRNASKK) and 67 to 156 (VNNV…KGRP). Residues 71 to 100 (DDTDDDDFVLNDEGDGEESDNVEIEFENEL) show a composition bias toward acidic residues. The tract at residues 159–672 (LLKDLSSARD…AGLLTLEYLS (514 aa)) is sufficient for interaction with TFC8. Cysteine 375 and cysteine 383 are oxidised to a cystine.

In terms of assembly, heterodimer with TFC8. Component of the TFIIIC complex composed of TFC1, TFC3, TFC4, TFC6, TFC7 and TFC8. The subunits are organized in two globular domains, tauA and tauB, connected by a proteolysis-sensitive and flexible linker. Interacts with TFC1, TFC3, TFC4 and directly with TFC8.

The protein localises to the nucleus. TFIIIC mediates tRNA and 5S RNA gene activation by binding to intragenic promoter elements. Upstream of the transcription start site, TFIIIC assembles the initiation complex TFIIIB-TFIIIC-tDNA, which is sufficient for RNA polymerase III recruitment and function. Part of the tauB domain of TFIIIC that binds boxB DNA promoter sites of tRNA and similar genes. Cooperates with TFC3 in DNA binding. This chain is Transcription factor tau 91 kDa subunit (TFC6), found in Saccharomyces cerevisiae (strain ATCC 204508 / S288c) (Baker's yeast).